A 158-amino-acid polypeptide reads, in one-letter code: uncharacterized protein (158 aa).

Positions 13–110 (ESVGRALELV…WGDEYLPRPE (98 aa)) constitute an HTH hxlR-type domain.

This is an uncharacterized protein from Mycobacterium tuberculosis (strain CDC 1551 / Oshkosh).